The primary structure comprises 413 residues: CCA-adding enzyme (413 aa).

Residues Ser42 and Lys45 each coordinate ATP. CTP contacts are provided by Ser42 and Lys45. Asp54, Asp56, and Asp107 together coordinate Mg(2+). Residues His130, Lys150, and Tyr159 each coordinate ATP. His130, Lys150, and Tyr159 together coordinate CTP.

It belongs to the tRNA nucleotidyltransferase/poly(A) polymerase family. Archaeal CCA-adding enzyme subfamily. Homodimer. Requires Mg(2+) as cofactor.

The catalysed reaction is a tRNA precursor + 2 CTP + ATP = a tRNA with a 3' CCA end + 3 diphosphate. It catalyses the reaction a tRNA with a 3' CCA end + 2 CTP + ATP = a tRNA with a 3' CCACCA end + 3 diphosphate. In terms of biological role, catalyzes the addition and repair of the essential 3'-terminal CCA sequence in tRNAs without using a nucleic acid template. Adds these three nucleotides in the order of C, C, and A to the tRNA nucleotide-73, using CTP and ATP as substrates and producing inorganic pyrophosphate. tRNA 3'-terminal CCA addition is required both for tRNA processing and repair. Also involved in tRNA surveillance by mediating tandem CCA addition to generate a CCACCA at the 3' terminus of unstable tRNAs. While stable tRNAs receive only 3'-terminal CCA, unstable tRNAs are marked with CCACCA and rapidly degraded. The protein is CCA-adding enzyme of Sulfurisphaera tokodaii (strain DSM 16993 / JCM 10545 / NBRC 100140 / 7) (Sulfolobus tokodaii).